The sequence spans 584 residues: Arginine--tRNA ligase (584 aa).

Residues A129–H139 carry the 'HIGH' region motif.

The protein belongs to the class-I aminoacyl-tRNA synthetase family. In terms of assembly, monomer.

Its subcellular location is the cytoplasm. The catalysed reaction is tRNA(Arg) + L-arginine + ATP = L-arginyl-tRNA(Arg) + AMP + diphosphate. The sequence is that of Arginine--tRNA ligase from Halorhodospira halophila (strain DSM 244 / SL1) (Ectothiorhodospira halophila (strain DSM 244 / SL1)).